Reading from the N-terminus, the 340-residue chain is Putative D-lactate dehydrogenase (340 aa).

NAD(+) contacts are provided by residues 153 to 154, aspartate 174, 206 to 207, 233 to 235, and aspartate 259; these read NI, TP, and VSR. Arginine 235 is a catalytic residue. Glutamate 264 is a catalytic residue. Histidine 296 serves as the catalytic Proton donor.

The protein belongs to the D-isomer specific 2-hydroxyacid dehydrogenase family.

The enzyme catalyses (R)-lactate + NAD(+) = pyruvate + NADH + H(+). In Dictyostelium discoideum (Social amoeba), this protein is Putative D-lactate dehydrogenase (ldhA).